A 156-amino-acid polypeptide reads, in one-letter code: Protein US1 (156 aa).

Disordered regions lie at residues 90–114 and 133–156; these read RSRS…SDGD and ARRW…DSTS. A compositionally biased stretch (low complexity) spans 96–111; it reads AESGRSSSSSSVSVLS. The span at 147–156 shows a compositional bias: polar residues; that stretch reads SQQAKNDSTS.

This Homo sapiens (Human) protein is Protein US1 (US1).